The sequence spans 615 residues: DNA mismatch repair protein MutL (615 aa).

Residues 363–397 (FAEPAAREPVAPRYSPAPASGSRPAAPWPNAQPGY) are disordered. Over residues 364–387 (AEPAAREPVAPRYSPAPASGSRPA) the composition is skewed to low complexity.

The protein belongs to the DNA mismatch repair MutL/HexB family.

Functionally, this protein is involved in the repair of mismatches in DNA. It is required for dam-dependent methyl-directed DNA mismatch repair. May act as a 'molecular matchmaker', a protein that promotes the formation of a stable complex between two or more DNA-binding proteins in an ATP-dependent manner without itself being part of a final effector complex. In Shigella flexneri, this protein is DNA mismatch repair protein MutL.